Consider the following 415-residue polypeptide: MSEVLFPAVRRRVVRPLARLFPSLRMSHARVLERTDHMTTTLEHPPVQHAQADIASGVLDIETGGKGRLRGRNLQPEPADPALSPALIRRHGLRRGDLVEGVCGDRRTLTDVVRVNGRTPDRRSRPHFADLTPLHPHERLRLEHPAAGLAGRVVDLLAPVGKGQRGLIVAPPKTGKTVLLQQFAAAVAGNHPEARLMVVLLDERPEEVTDMRRSVRGEVYSSTFDRSARQHIALAELVIERAKRLVEAGEDVVILLDSLTRLCRAHNNAASSGGRTLSGGVDAGALLGPKRFFGAARKAEEGGSLTILATALVETGSRADDFYFEELKSTGNMELRLSREPASRRVFPAVEPVGSGTRREELLLSGAETTALRGLRRALVARDGQSGLETLLERLRRTPDNATFLRQVQPTLPAG.

Residues 52–119 form the Rho RNA-BD domain; the sequence is ADIASGVLDI…TDVVRVNGRT (68 aa). Residues 161 to 166, 173 to 178, and arginine 204 contribute to the ATP site; these read GKGQRG and KTGKTV.

It belongs to the Rho family. As to quaternary structure, homohexamer. The homohexamer assembles into an open ring structure.

Its function is as follows. Facilitates transcription termination by a mechanism that involves Rho binding to the nascent RNA, activation of Rho's RNA-dependent ATPase activity, and release of the mRNA from the DNA template. In Streptomyces coelicolor (strain ATCC BAA-471 / A3(2) / M145), this protein is Transcription termination factor Rho.